The primary structure comprises 87 residues: Omega-lycotoxin-Am1c (87 aa).

A signal peptide spans 1-17; that stretch reads MKLSIFFVLFFIAIAYC. Residues 18–40 constitute a propeptide that is removed on maturation; it reads QPEFLDDEEDEVEETLPVAEEGR. Cystine bridges form between Cys44–Cys59, Cys51–Cys64, Cys58–Cys84, and Cys66–Cys82.

Belongs to the neurotoxin omega-lctx family. Expressed by the venom gland.

It is found in the secreted. In terms of biological role, modulates Cav2.1/CACNA1A voltage-gated calcium channels (P/Q-type currents) in rat cerebellar Purkinje cells and hippocampal CA1-CA3 neurons. At saturating concentrations (&gt;10 nM) decelerates activation kinetics and slightly increases peak amplitude without affecting deactivation kinetics. In vivo, does not cause death when intravenously injected into mice. In rat models, through its activity on Cav2.1/CACNA1A, has an ameliorative effect on memory defects provoked by hyperstimulation of N-methyl-D-aspartate receptors (NMDARs) in the hippocampus. The chain is Omega-lycotoxin-Am1c from Alopecosa marikovskyi (Wolf spider).